We begin with the raw amino-acid sequence, 129 residues long: Mini-ribonuclease 3-like protein (129 aa).

The active site involves Asp23.

It belongs to the MrnC RNase family.

Might be a ribonuclease involved in RNA processing. The sequence is that of Mini-ribonuclease 3-like protein (mrnCL) from Fusobacterium nucleatum subsp. nucleatum (strain ATCC 25586 / DSM 15643 / BCRC 10681 / CIP 101130 / JCM 8532 / KCTC 2640 / LMG 13131 / VPI 4355).